The chain runs to 323 residues: Serine/threonine-protein phosphatase PP1-gamma catalytic subunit (323 aa).

Alanine 2 carries the post-translational modification N-acetylalanine. Mn(2+) contacts are provided by aspartate 64, histidine 66, aspartate 92, and asparagine 124. The active-site Proton donor is histidine 125. Histidine 173 and histidine 248 together coordinate Mn(2+). The segment at 302–323 is disordered; that stretch reads KKPNATRPVTPPRGMITKQAKK. Phosphothreonine is present on residues threonine 307 and threonine 311.

The protein belongs to the PPP phosphatase family. PP-1 subfamily. In terms of assembly, PP1 comprises a catalytic subunit, PPP1CA, PPP1CB or PPP1CC, which is folded into its native form by inhibitor 2 and glycogen synthetase kinase 3, and then complexed to one or several targeting or regulatory subunits. PPP1R12A, PPP1R12B and PPP1R12C mediate binding to myosin. PPP1R3A (in skeletal muscle), PPP1R3B (in liver), PPP1R3C, PPP1R3D and PPP1R3F (in brain) mediate binding to glycogen. Interacts with cyanobacterial toxin microcystin; disulfide-linked. Interacts with PPP1R3B and PPP1R7. Isoform 2 interacts with SPZ1. Interacts with CDCA2. PPP1R15A and PPP1R15B mediate binding to EIF2S1. Part of a complex containing PPP1R15B, PP1 and NCK1/2. Interacts with IKFZ1; the interaction targets PPP1CC to pericentromeric heterochromatin, dephosphorylates IKAROS, stabilizes it and prevents it from degradation. Interacts with PPP1R42; the interaction is direct. Interacts with NOM1 and PPP1R8. Component of the PTW/PP1 phosphatase complex, composed of PPP1R10/PNUTS, TOX4, WDR82, and PPP1CA or PPP1CB or PPP1CC. Interacts with PPP1R8. Interacts with isoform 1 and isoform 4 NEK2. Interacts with URI1; the interaction is phosphorylation-dependent and occurs in a growth factor-dependent manner. Interacts with FOXP3. Interacts with TMEM225 (via RVxF motif). Interacts with MKI67. Interacts with RRP1B; this targets PPP1CC to the nucleolus. Interacts with PPP1R2B. Found in a complex with PPP1CA, PPP1CC, SHC1 and PEAK1. Interacts with DYNLT4. Interacts (via RVxF motif) with FIRRM; regulates PLK1 kinase activity. Interacts with the KNL1 complex subunit KNL1; the interaction is direct and mutually exclusive with KNL1 binding to microtubules. Component of the SHOC2-MRAS-PP1c (SMP) complex consisting of SHOC2, GTP-bound M-Ras/MRAS and the catalytic subunit of protein phosphatase 1 (either PPP1CA, PPP1CB or PPP1CC). SHOC2 and PP1c preferably bind M-Ras/MRAS, but they also bind K-Ras/KRAS, N-Ras/NRAS and H-Ras/HRAS; these interactions are GTP-dependent and both SHOC2 and PP1c are required to form a stable complex. Interacts with SHOC2 in the absence of Ras GTPases. Requires Mn(2+) as cofactor. Phosphorylated by NEK2.

The protein localises to the cytoplasm. Its subcellular location is the nucleus. It localises to the nucleolus. The protein resides in the nucleoplasm. It is found in the nucleus speckle. The protein localises to the chromosome. Its subcellular location is the centromere. It localises to the kinetochore. The protein resides in the cleavage furrow. It is found in the midbody. The protein localises to the mitochondrion. Its subcellular location is the cytoskeleton. It localises to the microtubule organizing center. The catalysed reaction is O-phospho-L-seryl-[protein] + H2O = L-seryl-[protein] + phosphate. It carries out the reaction O-phospho-L-threonyl-[protein] + H2O = L-threonyl-[protein] + phosphate. Its activity is regulated as follows. Inactivated by binding to URI1. The phosphatase activity of the PPP1R15A-PP1 complex toward EIF2S1 is specifically inhibited by Salubrinal, a drug that protects cells from endoplasmic reticulum stress. Protein phosphatase that associates with over 200 regulatory proteins to form highly specific holoenzymes which dephosphorylate hundreds of biological targets. Protein phosphatase 1 (PP1) is essential for cell division, and participates in the regulation of glycogen metabolism, muscle contractility and protein synthesis. Dephosphorylates RPS6KB1. Involved in regulation of ionic conductances and long-term synaptic plasticity. May play an important role in dephosphorylating substrates such as the postsynaptic density-associated Ca(2+)/calmodulin dependent protein kinase II. Component of the PTW/PP1 phosphatase complex, which plays a role in the control of chromatin structure and cell cycle progression during the transition from mitosis into interphase. In balance with CSNK1D and CSNK1E, determines the circadian period length, through the regulation of the speed and rhythmicity of PER1 and PER2 phosphorylation. May dephosphorylate CSNK1D and CSNK1E. Regulates the recruitment of the SKA complex to kinetochores. Dephosphorylates the 'Ser-418' residue of FOXP3 in regulatory T-cells (Treg) from patients with rheumatoid arthritis, thereby inactivating FOXP3 and rendering Treg cells functionally defective. Together with PPP1CA (PP1-alpha subunit), dephosphorylates IFIH1/MDA5 and RIG-I leading to their activation and a functional innate immune response. Core component of the SHOC2-MRAS-PP1c (SMP) holophosphatase complex that regulates the MAPK pathway activation. The SMP complex specifically dephosphorylates the inhibitory phosphorylation at 'Ser-259' of RAF1 kinase, 'Ser-365' of BRAF kinase and 'Ser-214' of ARAF kinase, stimulating their kinase activities. Dephosphorylates MKI67 at the onset of anaphase. The SMP complex enhances the dephosphorylation activity and substrate specificity of PP1c. The polypeptide is Serine/threonine-protein phosphatase PP1-gamma catalytic subunit (PPP1CC) (Homo sapiens (Human)).